The chain runs to 230 residues: UPF0758 protein Daud_1467 (230 aa).

The 123-residue stretch at Thr108–Phe230 folds into the MPN domain. Zn(2+)-binding residues include His179, His181, and Asp192. Residues His179 to Asp192 carry the JAMM motif motif.

This sequence belongs to the UPF0758 family.

The sequence is that of UPF0758 protein Daud_1467 from Desulforudis audaxviator (strain MP104C).